A 171-amino-acid polypeptide reads, in one-letter code: Protein TIFY 11d (171 aa).

The Tify domain occupies 65-100 (PSAGTAPLTIFYDGRMVVVDDVPVEKAAELMRLAGS). A Jas motif is present at residues 117–142 (PIARKASLQRFLQKRKHRITTTSEPY). A Nuclear localization signal motif is present at residues 119 to 126 (ARKASLQR).

It belongs to the TIFY/JAZ family. As to quaternary structure, interacts with BHLH148 and COI1A. Interacts with COI1A, COI1B and COI2 in a coronatine-dependent manner. Coronatine is an analog of jasmonoyl isoleucine (JA-Ile). Post-translationally, ubiquitinated. Increase in jasmonoyl isoleucine (JA-Ile) levels mediates its degradation via COI1A-mediated proteasome pathway.

The protein localises to the nucleus. Repressor of jasmonate (JA) responses. May act on an initial response of JA-regulated gene expression toward drought tolerance as part of a BHLH148-TIFY11D/JAZ12-COI1A complex. This Oryza sativa subsp. japonica (Rice) protein is Protein TIFY 11d.